A 635-amino-acid chain; its full sequence is Threonine--tRNA ligase (635 aa).

The region spanning 1 to 61 (MINISFPDGS…EHDCKLRILT (61 aa)) is the TGS domain. Residues 242–533 (DHRKIGKELD…LIEEYAGKFP (292 aa)) form a catalytic region. Zn(2+)-binding residues include Cys-333, His-384, and His-510.

It belongs to the class-II aminoacyl-tRNA synthetase family. In terms of assembly, homodimer. It depends on Zn(2+) as a cofactor.

It is found in the cytoplasm. It catalyses the reaction tRNA(Thr) + L-threonine + ATP = L-threonyl-tRNA(Thr) + AMP + diphosphate + H(+). Functionally, catalyzes the attachment of threonine to tRNA(Thr) in a two-step reaction: L-threonine is first activated by ATP to form Thr-AMP and then transferred to the acceptor end of tRNA(Thr). Also edits incorrectly charged L-seryl-tRNA(Thr). This chain is Threonine--tRNA ligase, found in Rickettsia typhi (strain ATCC VR-144 / Wilmington).